The sequence spans 411 residues: Carbohydrate sulfotransferase 5 (411 aa).

The Cytoplasmic segment spans residues 1–30 (MGMRARVPKVAHSTRRPPAARMWLPRFSSK). The helical; Signal-anchor for type II membrane protein transmembrane segment at 31 to 48 (TVTVLLLAQTTCLLLFII) threads the bilayer. At 49–411 (SRPGPSSPAG…PDHFSWASPD (363 aa)) the chain is on the lumenal side. A 3'-phosphoadenylyl sulfate-binding site is contributed by 71-77 (WRSGSSF). A glycan (N-linked (GlcNAc...) asparagine) is linked at Asn-138. Residue 224–232 (RDPRAVLRS) participates in 3'-phosphoadenylyl sulfate binding. N-linked (GlcNAc...) asparagine glycans are attached at residues Asn-327 and Asn-350.

The protein belongs to the sulfotransferase 1 family. Gal/GlcNAc/GalNAc subfamily. In terms of tissue distribution, predominantly expressed in small and large intestines and colon. Weakly expressed in lymphocytes. Not expressed in other tissues. Down-regulated in colonic adenocarcinomas.

It localises to the golgi apparatus membrane. Its function is as follows. Sulfotransferase that utilizes 3'-phospho-5'-adenylyl sulfate (PAPS) as sulfonate donor to catalyze the transfer of sulfate to position 6 of non-reducing N-acetylglucosamine (GlcNAc) residues and O-linked sugars of mucin-type acceptors. Acts on the non-reducing terminal GlcNAc of short carbohydrate substrates. However, it does not transfer sulfate to longer carbohydrate substrates that have poly-N-acetyllactosamine structures. Has no activity toward keratan. Not involved in generating HEV-expressed ligands for SELL. Its substrate specificity may be influenced by its subcellular location. The protein is Carbohydrate sulfotransferase 5 (CHST5) of Homo sapiens (Human).